Reading from the N-terminus, the 217-residue chain is Probable GTP-binding protein EngB (217 aa).

The region spanning 44–217 is the EngB-type G domain; that stretch reads DRIEVCFAGR…TLRTIVATLG (174 aa). GTP-binding positions include 52-59, 79-83, 97-100, 164-167, and 198-200; these read GRSNVGKS, GRTQE, DLPG, TKAD, and TSS. Positions 59 and 81 each coordinate Mg(2+).

The protein belongs to the TRAFAC class TrmE-Era-EngA-EngB-Septin-like GTPase superfamily. EngB GTPase family. It depends on Mg(2+) as a cofactor.

In terms of biological role, necessary for normal cell division and for the maintenance of normal septation. In Cereibacter sphaeroides (strain ATCC 17023 / DSM 158 / JCM 6121 / CCUG 31486 / LMG 2827 / NBRC 12203 / NCIMB 8253 / ATH 2.4.1.) (Rhodobacter sphaeroides), this protein is Probable GTP-binding protein EngB.